The sequence spans 404 residues: L-cysteine:1D-myo-inositol 2-amino-2-deoxy-alpha-D-glucopyranoside ligase 1 (404 aa).

C47 lines the Zn(2+) pocket. Residues 47-50, T62, and 85-87 each bind L-cysteinyl-5'-AMP; these read CGIT and NIT. A 'HIGH' region motif is present at residues 49-59; that stretch reads ITPYDSTHLGH. The 'ERGGDP' region motif lies at 188–193; the sequence is ERGGDP. W228 lines the L-cysteinyl-5'-AMP pocket. C232 contacts Zn(2+). Residue 250-252 participates in L-cysteinyl-5'-AMP binding; the sequence is GSD. Residue H257 participates in Zn(2+) binding. L-cysteinyl-5'-AMP is bound at residue I284. The 'KMSKS' region signature appears at 290-294; that stretch reads KMSKS.

The protein belongs to the class-I aminoacyl-tRNA synthetase family. MshC subfamily. Monomer. Zn(2+) is required as a cofactor.

The enzyme catalyses 1D-myo-inositol 2-amino-2-deoxy-alpha-D-glucopyranoside + L-cysteine + ATP = 1D-myo-inositol 2-(L-cysteinylamino)-2-deoxy-alpha-D-glucopyranoside + AMP + diphosphate + H(+). Its function is as follows. Catalyzes the ATP-dependent condensation of GlcN-Ins and L-cysteine to form L-Cys-GlcN-Ins. The sequence is that of L-cysteine:1D-myo-inositol 2-amino-2-deoxy-alpha-D-glucopyranoside ligase 1 from Corynebacterium urealyticum (strain ATCC 43042 / DSM 7109).